A 431-amino-acid chain; its full sequence is Glucose-1-phosphate adenylyltransferase (431 aa).

Lysine 39 provides a ligand contact to beta-D-fructose 1,6-bisphosphate. 3 residues coordinate AMP: arginine 40, histidine 46, and arginine 52. Alpha-D-glucose 1-phosphate is bound at residue tyrosine 114. Arginine 130 provides a ligand contact to AMP. Alpha-D-glucose 1-phosphate contacts are provided by residues glycine 179, 194–195 (EK), and serine 212. Positions 370 and 386 each coordinate AMP. Beta-D-fructose 1,6-bisphosphate contacts are provided by residues 419 to 423 (REMLR) and 429 to 431 (QER).

The protein belongs to the bacterial/plant glucose-1-phosphate adenylyltransferase family. In terms of assembly, homotetramer.

The catalysed reaction is alpha-D-glucose 1-phosphate + ATP + H(+) = ADP-alpha-D-glucose + diphosphate. It participates in glycan biosynthesis; glycogen biosynthesis. With respect to regulation, allosterically activated by fructose-1,6-bisphosphate (F16BP) and inhibited by AMP. In terms of biological role, involved in the biosynthesis of ADP-glucose, a building block required for the elongation reactions to produce glycogen. Catalyzes the reaction between ATP and alpha-D-glucose 1-phosphate (G1P) to produce pyrophosphate and ADP-Glc. The sequence is that of Glucose-1-phosphate adenylyltransferase from Salmonella arizonae (strain ATCC BAA-731 / CDC346-86 / RSK2980).